Reading from the N-terminus, the 311-residue chain is MGESKTTTGEGFGFYKEYVAGMMAGLATVAVGHPFDTVKVKLQKHNTDVQGLRYKNGLHCASRILQTEGVKGLYRGATSSFMGMAFESSLMFGIYSQAKLFLRGTLPDDGPRPEIIVPSAMFGGAIISFVLCPTELVKCRMQIQGTDSLVPNFRRYNSPLDCAVQTVKNDGVTGIFRGGSATLLRECTGNAVFFTVYEYLRYHIHSRLEDSKLKDGYLVDMGIGVLTGGLGGIACWSAVLPFDVAKTIIQTSSEKATERNPFKVLSSIHKRAGLKGCYAGLGPTIVRAFPANAAAIVAWEFSMKMLGIKRD.

3 Solcar repeats span residues 12–101 (FGFY…AKLF), 111–203 (PRPE…LRYH), and 219–305 (VDMG…SMKM). 6 helical membrane-spanning segments follow: residues 18-38 (YVAG…FDTV), 76-96 (GATS…GIYS), 113-133 (PEII…VLCP), 178-197 (GGSA…FTVY), 222-242 (GIGV…VLPF), and 288-308 (AFPA…MLGI).

Belongs to the mitochondrial carrier (TC 2.A.29) family. High expression in flowers and siliques. Lower expression in leaves and stems.

It localises to the mitochondrion inner membrane. Inhibited by mercuric chloride. Functionally, mitochondrial arginine transporter that catalyzes the counter-exchange of arginine with lysine, ornithine, arginine and histidine. Substrate preference in reconstituted proteoliposomes is arginine &gt; lysine &gt; ornithine &gt; histidine. May be involved in the delivery of arginine, released from seed reserves, to mitochondrial arginase and the export of ornithine. This Arabidopsis thaliana (Mouse-ear cress) protein is Mitochondrial arginine transporter BAC1 (BAC1).